We begin with the raw amino-acid sequence, 401 residues long: Phosphoglycerate kinase (401 aa).

Substrate-binding positions include 23–25, Arg39, 62–65, Arg121, and Arg154; these read DFN and HLGR. ATP contacts are provided by residues Lys207, Gly298, Glu329, and 355–358; that span reads GGDT.

It belongs to the phosphoglycerate kinase family. As to quaternary structure, monomer.

Its subcellular location is the cytoplasm. It catalyses the reaction (2R)-3-phosphoglycerate + ATP = (2R)-3-phospho-glyceroyl phosphate + ADP. It functions in the pathway carbohydrate degradation; glycolysis; pyruvate from D-glyceraldehyde 3-phosphate: step 2/5. This is Phosphoglycerate kinase from Campylobacter fetus subsp. fetus (strain 82-40).